Consider the following 248-residue polypeptide: Mitochondrial import inner membrane translocase subunit Tim21 (248 aa).

The transit peptide at 1–18 (MICTFLRAVQYTEKLHRS) directs the protein to the mitochondrion. The segment at 67 to 98 (TQGPSPRKAKEDGSKQVSVHRSQRGGTAVPTS) is disordered. Residues 108–128 (FTYLIVVLFGISITGGLFYTI) form a helical membrane-spanning segment.

This sequence belongs to the TIM21 family. Component of the TIM23 complex. Component of the MITRAC (mitochondrial translation regulation assembly intermediate of cytochrome c oxidase complex) complex, the core components of this complex being COA3/MITRAC12 and COX14. Interacts with COA3 and MT-CO1/COX1.

The protein resides in the mitochondrion membrane. Its function is as follows. Participates in the translocation of transit peptide-containing proteins across the mitochondrial inner membrane. Also required for assembly of mitochondrial respiratory chain complex I and complex IV as component of the MITRAC (mitochondrial translation regulation assembly intermediate of cytochrome c oxidase complex) complex. Probably shuttles between the presequence translocase and respiratory-chain assembly intermediates in a process that promotes incorporation of early nuclear-encoded subunits into these complexes. The polypeptide is Mitochondrial import inner membrane translocase subunit Tim21 (TIMM21) (Homo sapiens (Human)).